A 619-amino-acid polypeptide reads, in one-letter code: 1-deoxy-D-xylulose-5-phosphate synthase (619 aa).

Thiamine diphosphate is bound by residues H76 and 117-119 (AHS). Mg(2+) is bound at residue D148. Thiamine diphosphate contacts are provided by residues 149-150 (GA), N177, Y284, and E366. Position 177 (N177) interacts with Mg(2+).

This sequence belongs to the transketolase family. DXPS subfamily. Homodimer. Mg(2+) is required as a cofactor. Thiamine diphosphate serves as cofactor.

The enzyme catalyses D-glyceraldehyde 3-phosphate + pyruvate + H(+) = 1-deoxy-D-xylulose 5-phosphate + CO2. The protein operates within metabolic intermediate biosynthesis; 1-deoxy-D-xylulose 5-phosphate biosynthesis; 1-deoxy-D-xylulose 5-phosphate from D-glyceraldehyde 3-phosphate and pyruvate: step 1/1. In terms of biological role, catalyzes the acyloin condensation reaction between C atoms 2 and 3 of pyruvate and glyceraldehyde 3-phosphate to yield 1-deoxy-D-xylulose-5-phosphate (DXP). This is 1-deoxy-D-xylulose-5-phosphate synthase from Azoarcus sp. (strain BH72).